Reading from the N-terminus, the 265-residue chain is 2-amino-3,7-dideoxy-D-threo-hept-6-ulosonate synthase (265 aa).

Asp25 functions as the Proton acceptor in the catalytic mechanism. 1-deoxy-D-threo-hexo-2,5-diulose 6-phosphate-binding positions include 25–29 and 144–146; these read DHGIT and YAR. The active-site Proton donor is the Tyr144. Lys174 (schiff-base intermediate with substrate) is an active-site residue. 1-deoxy-D-threo-hexo-2,5-diulose 6-phosphate contacts are provided by residues 199–200 and 226–227; these read GG and GR.

The protein belongs to the DeoC/FbaB aldolase family. ADHS subfamily. As to quaternary structure, homodecamer.

The enzyme catalyses 1-deoxy-D-threo-hexo-2,5-diulose 6-phosphate + L-aspartate 4-semialdehyde = 2,3-dioxopropyl phosphate + 2-amino-2,3,7-trideoxy-D-lyxo-hept-6-ulosonate. Functionally, catalyzes a transaldol reaction between 6-deoxy-5-ketofructose 1-phosphate (DKFP) and L-aspartate semialdehyde (ASA) with an elimination of hydroxypyruvaldehyde phosphate to yield 2-amino-3,7-dideoxy-D-threo-hept-6-ulosonate (ADH). Plays a key role in an alternative pathway of the biosynthesis of 3-dehydroquinate (DHQ), which is involved in the canonical pathway for the biosynthesis of aromatic amino acids. In Halobacterium salinarum (strain ATCC 700922 / JCM 11081 / NRC-1) (Halobacterium halobium), this protein is 2-amino-3,7-dideoxy-D-threo-hept-6-ulosonate synthase.